The chain runs to 46 residues: Esculentin-1HSa (46 aa).

Cysteine 40 and cysteine 46 form a disulfide bridge.

Expressed by the skin glands.

The protein resides in the secreted. In terms of biological role, has antibacterial activity against the Gram-positive bacterium S.aureus ATCC 25923 (MIC=12 uM) and the Gram-negative bacterium E.coli ATCC 25726 (MIC=12 uM). The protein is Esculentin-1HSa of Odorrana hosii (Hose's rock frog).